The sequence spans 209 residues: COP9 signalosome complex subunit 8 (209 aa).

Residues 8-179 (DNAFSFRKLL…GALDVSLNRF (172 aa)) enclose the PCI domain. Serine 175 carries the post-translational modification Phosphoserine.

Belongs to the CSN8 family. As to quaternary structure, component of the CSN complex, composed of COPS1/GPS1, COPS2, COPS3, COPS4, COPS5, COPS6, COPS7 (COPS7A or COPS7B), COPS8 and COPS9. In the complex, it probably interacts directly with COPS3, COPS4 and COPS7 (COPS7A or COPS7B).

The protein resides in the cytoplasm. Its subcellular location is the nucleus. Its function is as follows. Component of the COP9 signalosome complex (CSN), a complex involved in various cellular and developmental processes. The CSN complex is an essential regulator of the ubiquitin (Ubl) conjugation pathway by mediating the deneddylation of the cullin subunits of SCF-type E3 ligase complexes, leading to decrease the Ubl ligase activity of SCF-type complexes such as SCF, CSA or DDB2. The complex is also involved in phosphorylation of p53/TP53, c-jun/JUN, IkappaBalpha/NFKBIA, ITPK1 and IRF8/ICSBP, possibly via its association with CK2 and PKD kinases. CSN-dependent phosphorylation of TP53 and JUN promotes and protects degradation by the Ubl system, respectively. The polypeptide is COP9 signalosome complex subunit 8 (Cops8) (Rattus norvegicus (Rat)).